A 303-amino-acid chain; its full sequence is Crk-like protein (303 aa).

Residues 14–102 (WYMGPVTRQE…LDTTTLIEPA (89 aa)) enclose the SH2 domain. The region spanning 123–183 (ENLEYVRTLY…PVPYVEKLVR (61 aa)) is the SH3 1 domain. The residue at position 127 (Tyr127) is a Phosphotyrosine. The disordered stretch occupies residues 184–203 (SSPHGKHGNRNSNSYGIPEP). Tyr207 bears the Phosphotyrosine mark. The SH3 2 domain occupies 235 to 296 (NGPVFAKAIQ…PFTHVKIFDP (62 aa)).

It belongs to the CRK family. In terms of assembly, interacts with DOCK2 and EPOR. Interacts with phosphorylated CBLB and IRS4. Interacts with INPP5D/SHIP1. Interacts with BCAR1/CAS and NEDD9/HEF1. Post-translationally, phosphorylated on tyrosine. Phosphorylation is prominent during early development, but decreases at later embryonic stages and in newborn mice.

Functionally, may mediate the transduction of intracellular signals. This chain is Crk-like protein (Crkl), found in Mus musculus (Mouse).